Here is a 326-residue protein sequence, read N- to C-terminus: Myeloid protein 1 (326 aa).

The N-terminal stretch at 1 to 18 (MPALSLIALLSLVSTAFA) is a signal peptide. 2 consecutive repeat copies span residues 28-162 (QQGR…SDPT) and 177-312 (QQDA…SDPT). 3 disulfide bridges follow: cysteine 37–cysteine 74, cysteine 48–cysteine 53, and cysteine 113–cysteine 156. 3 residues coordinate Zn(2+): histidine 67, aspartate 71, and histidine 152. Residues 307 to 326 (DRSDPTSNLERGKGESEMEV) are disordered.

This sequence belongs to the LECT2/MIM-1 family. Substrate for arginine-specific ADP-ribosyltransferase.

Its subcellular location is the cytoplasmic granule. The sequence is that of Myeloid protein 1 (MIM1) from Gallus gallus (Chicken).